A 212-amino-acid chain; its full sequence is MEHFHGNRWDQLRAVEADILCPPPADPFQIFPSGWTRASELSEKGWRELLDRRRSQSPPPREPSPDVRRAIRRTPPPRVNRVAPIRLPERRPLRQLNANDARRPAQDAANRINQENMRAGNIDNGQPRRRALSPTQLPGVRAIPKDFNRFFRGLLTPGEFFAKSQTRYLGPFDEMPTEDTLPAADEYIILQRMGRLPDSGKSIFRQVGNLST.

A disordered region spans residues 47–129; sequence RELLDRRRSQ…GNIDNGQPRR (83 aa).

This is an uncharacterized protein from Caenorhabditis elegans.